The sequence spans 2575 residues: MRSLAQEGNRLLVFGPQALSAKGNDFRALQAKVAQLTWITHVITDLPNVWGDFVKEFPKYSLVSGETLLQKLIKWVDTGDIDLGTNNHLANIILSPLVIITHITEYLKYLQNGAPKTNHESSTETLGFCMGFLSALVVSVSNDSIDIERYGAAAIRLAMIIGGIVDAQDGLDAQGPSKSLATAWNSTKAAEELQQILVHFPEAYVSVSYDDQRATITTASKTVSTLQGQLRTAGIVANEIGLFGRFHNDWYAEDVDEIIDFVSSRPELVLPDATDLIYQTRSNSGTGLITSGKLHDHAIRTILVQHSNWYQTFKSIHDTQIKSLKTSVIAFGPEPCVPPSILREIKQNVIHASDIQAESIAPPPIVLPQQVKEDDIAVVGMSLKVAGADDTDEFWDLLCAGQSQHREVPRNRIKFDNDWREVGPKRKYFGNFLNDHDIFDQKFFKKSAREAASTDPQQRILLHVAYQALEQAGYFNSPEQDKRIGCFIGECANDYADNVACHQPNAFTATGNLKSFIAGKVSHYFGWTGTGLTLDTACSSSLVAVHLACKAILSGECNAALAGGVNMMNSALWFQNLAAASFLSPTGQCKPFDANADGYCRGEAVGVVFLKSMSAAIANGDQIIGTISSTGVSQNQNCTPIFVPNAPSLSTLFQDVIQDAQVDPKKISVVEAHGTGTQVGDPAEYDSIRRVLGGANLRSKPLAFGSVKGLVGHTEASSGLVSLIKILLMIQNKTIPPQASHESLNPHLNATADDKMEIITKKTTWDEDYRAALINNYGASGSNASAVVTEAPRLHESTTSATSFPVLDYPFHIFGKDDRAIRDYCTKLAKSLEAKGVNNLSIANLSFNICRQSNPTLDRGLVFTSRSVKELVEKLNAFQTGDVNVAATIVQPQLRPVVLCFGGQISTYVGLSKEVYENVRILARYLDQCDYACQSLGCESIFPGIFQRSPIEDTVKLQTMLFSIQYACGKSWIDSGVQPVAVVGHSFGELTSLCISGVLSLEYALKMIVGRATIIRESWGSEKGAMMAIEADQEEVQKLLAETSLPCEEAGQRAPTIACLNGPRSFTIAGSSRAIDIAGETISKNPAYSRFRFKKLNVTNAFHSTLVEPLMSDLEKVGQSLQFNEPSIHLERATEFYSSERLAARYVADHMRNPVFFNHAVQRISKKYPDAIFVEAGSNSTITNMASRALGSPVASHFQPVNITTDNGLQLLVDSTASLWKQGLMVPFWAHSRVQTYEYSPVFLPAYQFEKLRHWMEPVPPPTSSKQVVGGQAEEPKGLWSFIDYMDEKKRGARFRINTETDKYKELVSGHIIAQTAPICPATVEVDIAVEALISLYSNFATSGLQPRICNVDNQSPICIDSSRSVWLDVESQESAPNNWSWRIVSTGESSKASTVHVTGQIIFVSTDNAEWQLEFSRYERLIGHQRCVGLLNCDDADDIIQGRNIYRSFGEVVDYSAPYRGLQKLVGKGTESAGRVVKKYTGDSWLDALLSDAFSQVGGIWVNCMTDKDPGDMYIATGFEKWMRSPDITTDYKRPEAWDVFAYHQELPLEHSYLTDIFIFDSTNGKLTEVILGVNYHKVAKATMSKILARLSGLPTTSTSTNVKSSPAAAEGSSPVENGASGSGSKAKKTKSGAGQDVVNKTKGLLAEISGMGVEEISNEAQLADIGIDSLMGMELARELEGMFKCTLPSDELMNVTDFAGLVQIIKSTLGVSDDEEGSDQEGSEASSSESSTTFTPSTTATTVSDVEDNGNEKSIGKEKSVSYTGDLQLPSSTIIEAFEESRKLTDDFIANYRCADYMETVLPRQTQLCVALTVEAFEQLGCPIRSAKAGDILTRIPHDPQHQRLTNYLHKMLEEEARLIDTDGSKITRTAIAPPSKSSDAILEQLLRDFPDHEWANKLTHFAGSRLADVLKGECDGIKLIFGSDEGRRLVTGLYGDSLLNKLANVQMQDIVARVASKMPQDQGPLKILELGAGTGGTTKGMVALLAKLGVPVEYTFTDLSGSFVAAARKTFKEYPFMKYKVHDIEKSPPADLVGTQHIIIASNAMHATHNLEISTANVRKALRPDGFLMMLEMTSPVFWVDLIFGLFEGWWLFDDGREHAIGHQTLWERIMRAAGYGHIDWTDGNSPELEIQRVIIALASGPQYDRQPVAPLPQPEKQLQPAAGRKAAVDEYVRKYTEGFSLGERVERATSPSQYEQCVLITGATGSLGSHLVAHVAALPNVKTVVCLNRRSGSDANARQQKALEDRGILIDAASQSKLQVFQVTTSKPLLGLEKSDYEELLGKVTHIVHNAWPMTGKRPLSGLESQFQVMRNLIDFARDISAHRSKGSKVTLQLISSIAVVGHYPLWSGNVEVPEERMTLESVLPNGYGDAKFVCERMLEETLHKYPEQFRVMSVRPGQIAGSKVTGYWNAMEHLSFLFKSSQTLKVLPDFEGDLCWTPVDDVAGTCSDLLISDREPYLVYHIDNPVRQPWKEMIPLLAELLDIPRTNIVPFKEWVRRVRAFPGSVEWDNPAALLIDFLDDNFLRMSCGGLLLGTAKSCEHSPTLAAVGPVSVEVTKKYIQSWKNSGFLHK.

One can recognise a Starter acyltransferase (SAT) domain in the interval 89-228; the sequence is LANIILSPLV…ASKTVSTLQG (140 aa). Cys-129 serves as the catalytic Nucleophile; for transacylase activity. The active-site Proton donor/acceptor; for transacylase activity is the His-247. The 418-residue stretch at 373–790 folds into the Ketosynthase family 3 (KS3) domain; that stretch reads EDDIAVVGMS…GSNASAVVTE (418 aa). Residues Cys-538, His-673, and His-713 each act as for beta-ketoacyl synthase activity in the active site. Residues 901 to 1192 form the Malonyl-CoA:ACP transacylase (MAT) domain; it reads FGGQISTYVG…TNMASRALGS (292 aa). An N-terminal hotdog fold region spans residues 1276-1409; the sequence is PKGLWSFIDY…GQIIFVSTDN (134 aa). One can recognise a PKS/mFAS DH domain in the interval 1276–1586; sequence PKGLWSFIDY…YHKVAKATMS (311 aa). Positions 1307–1584 are product template (PT) domain; sequence LVSGHIIAQT…VNYHKVAKAT (278 aa). Residue His-1311 is the Proton acceptor; for dehydratase activity of the active site. Residues 1437–1586 are C-terminal hotdog fold; it reads ADDIIQGRNI…YHKVAKATMS (150 aa). Catalysis depends on Asp-1493, which acts as the Proton donor; for dehydratase activity. Over residues 1597–1606 the composition is skewed to polar residues; that stretch reads TTSTSTNVKS. The tract at residues 1597–1636 is disordered; that stretch reads TTSTSTNVKSSPAAAEGSSPVENGASGSGSKAKKTKSGAG. One can recognise a Carrier domain in the interval 1637 to 1711; sequence QDVVNKTKGL…GLVQIIKSTL (75 aa). At Ser-1671 the chain carries O-(pantetheine 4'-phosphoryl)serine. Residues 1713–1762 are disordered; that stretch reads VSDDEEGSDQEGSEASSSESSTTFTPSTTATTVSDVEDNGNEKSIGKEKS. Positions 1714–1724 are enriched in acidic residues; sequence SDDEEGSDQEG. A compositionally biased stretch (low complexity) spans 1725–1746; that stretch reads SEASSSESSTTFTPSTTATTVS. Over residues 1752-1762 the composition is skewed to basic and acidic residues; the sequence is GNEKSIGKEKS. The interval 1835-2130 is methyltransferase domain; it reads LTRIPHDPQH…HIDWTDGNSP (296 aa). Positions 2204-2448 constitute a Thioester reductase (TE) domain; it reads ITGATGSLGS…LCWTPVDDVA (245 aa).

Pantetheine 4'-phosphate serves as cofactor.

It functions in the pathway secondary metabolite biosynthesis. In terms of biological role, non-reducing polyketide synthase; part of the gene cluster that mediates the biosynthesis of mitorubrinol and mitorubrinic acid, two virulence factors that improve T.marneffei intracellular survival in macrophages. The two polyketide synthases pks12 and pks11 are probably responsible for sequential use in the biosynthesis of mitorubrinol and mitorubrinic acid. The first part of the biosynthesis is probably catalyzed by pks12, which synthesized orsellinic acid. This tetraketide is then used as a starter unit for pks11, which possesses a SAT domain, in the second part of the biosynthesis. Pks11, contains a methyltransferase domain, also served that methylates the products, using a methyl group from S-adenosylmethionine. The chain is Non-reducing polyketide synthase pks11 from Talaromyces marneffei (Penicillium marneffei).